Reading from the N-terminus, the 841-residue chain is Copper-transporting P-type ATPase (841 aa).

6 helical membrane passes run 186–206, 218–238, 256–276, 285–305, 445–465, and 474–494; these read LWVS…PMLG, ATFI…LPFF, IGLG…APGI, GAAV…VFVG, AVFV…WAAI, and GLLA…GLAT. Aspartate 530 serves as the catalytic 4-aspartylphosphate intermediate. The next 2 membrane-spanning stretches (helical) occupy residues 602–622 and 638–658; these read GIAD…DLGI and GKTV…AVAD. Aspartate 729 and aspartate 733 together coordinate Mg(2+). The next 2 membrane-spanning stretches (helical) occupy residues 742–762 and 800–820; these read VGIA…ITLV and VAAG…IAAA.

This sequence belongs to the cation transport ATPase (P-type) (TC 3.A.3) family. Type IB subfamily.

The protein resides in the cell membrane. The catalysed reaction is Cu(2+)(in) + ATP + H2O = Cu(2+)(out) + ADP + phosphate + H(+). Involved in copper efflux. This is Copper-transporting P-type ATPase (actP) from Rhizobium leguminosarum bv. viciae.